The sequence spans 93 residues: Small ribosomal subunit protein uS19 (93 aa).

The protein belongs to the universal ribosomal protein uS19 family.

Functionally, protein S19 forms a complex with S13 that binds strongly to the 16S ribosomal RNA. This Agathobacter rectalis (strain ATCC 33656 / DSM 3377 / JCM 17463 / KCTC 5835 / VPI 0990) (Eubacterium rectale) protein is Small ribosomal subunit protein uS19.